The chain runs to 151 residues: Ribosome maturation factor RimP (151 aa).

It belongs to the RimP family.

It localises to the cytoplasm. Required for maturation of 30S ribosomal subunits. This chain is Ribosome maturation factor RimP, found in Shewanella woodyi (strain ATCC 51908 / MS32).